The primary structure comprises 241 residues: UPF0280 protein MK0206 (241 aa).

Belongs to the UPF0280 family.

The polypeptide is UPF0280 protein MK0206 (Methanopyrus kandleri (strain AV19 / DSM 6324 / JCM 9639 / NBRC 100938)).